A 420-amino-acid polypeptide reads, in one-letter code: Glutamyl-tRNA reductase (420 aa).

Residues 49–52, Ser107, 112–114, and Gln118 contribute to the substrate site; these read TCNR and EPQ. Catalysis depends on Cys50, which acts as the Nucleophile. Position 187 to 192 (187 to 192) interacts with NADP(+); that stretch reads GAGETI.

The protein belongs to the glutamyl-tRNA reductase family. Homodimer.

The catalysed reaction is (S)-4-amino-5-oxopentanoate + tRNA(Glu) + NADP(+) = L-glutamyl-tRNA(Glu) + NADPH + H(+). Its pathway is porphyrin-containing compound metabolism; protoporphyrin-IX biosynthesis; 5-aminolevulinate from L-glutamyl-tRNA(Glu): step 1/2. Catalyzes the NADPH-dependent reduction of glutamyl-tRNA(Glu) to glutamate 1-semialdehyde (GSA). In Methylococcus capsulatus (strain ATCC 33009 / NCIMB 11132 / Bath), this protein is Glutamyl-tRNA reductase.